Here is a 250-residue protein sequence, read N- to C-terminus: tRNA pseudouridine synthase A (250 aa).

The Nucleophile role is filled by D52. Y111 lines the substrate pocket.

It belongs to the tRNA pseudouridine synthase TruA family. In terms of assembly, homodimer.

The catalysed reaction is uridine(38/39/40) in tRNA = pseudouridine(38/39/40) in tRNA. In terms of biological role, formation of pseudouridine at positions 38, 39 and 40 in the anticodon stem and loop of transfer RNAs. The sequence is that of tRNA pseudouridine synthase A from Methylorubrum extorquens (strain CM4 / NCIMB 13688) (Methylobacterium extorquens).